Here is a 204-residue protein sequence, read N- to C-terminus: Recombination protein RecR (204 aa).

The segment at 61–76 (CARCNTFSETQICSTC) adopts a C4-type zinc-finger fold. A Toprim domain is found at 84–183 (SLLCIVETPA…KVTRIARGIP (100 aa)).

Belongs to the RecR family.

In terms of biological role, may play a role in DNA repair. It seems to be involved in an RecBC-independent recombinational process of DNA repair. It may act with RecF and RecO. This Polynucleobacter asymbioticus (strain DSM 18221 / CIP 109841 / QLW-P1DMWA-1) (Polynucleobacter necessarius subsp. asymbioticus) protein is Recombination protein RecR.